Reading from the N-terminus, the 491-residue chain is Protein translocase subunit SecY (491 aa).

At 1 to 20 the chain is on the cytoplasmic side; it reads MGWKEAAAPVLTRMPAVERP. The chain crosses the membrane as a helical span at residues 21 to 47; it reads EGHVPFRRKMYWTGGVLVLYFFLTNVP. Topologically, residues 48-58 are extracellular; that stretch reads LWGIQTAGNDF. Residues 59-66 constitute an intramembrane region (helical); the sequence is FGQFRSLL. The chain crosses the membrane as a discontinuously helical span at residues 59-87; that stretch reads FGQFRSLLAGGQGTVLQLGIGPIVTASIV. The stretch at 67 to 78 is an intramembrane region; sequence AGGQGTVLQLGI. Residues 79–87 constitute an intramembrane region (helical); the sequence is GPIVTASIV. Over 88-109 the chain is Cytoplasmic; sequence LQLLGGANLLGLDTDNDPRDQA. Residues 110-134 form a helical membrane-spanning segment; it reads IYQGLQKFLVGVMVVLTGAPMVFLG. The Extracellular segment spans residues 135–152; the sequence is NFLQPSQQLAQSMPGGAF. Residues 153–177 traverse the membrane as a helical segment; it reads GVEVLIFAQIAAGGILLLFMDEVIS. The Cytoplasmic portion of the chain corresponds to 178-183; that stretch reads KWGVGS. Residues 184-202 traverse the membrane as a helical segment; it reads GIGLFIVAGVSQSLVGGLV. Residues 203–244 are Extracellular-facing; that stretch reads FWEGGVGSQGLLPTWFDIIVGNVSNMPPLLSGSGIEFLLMQA. A helical transmembrane segment spans residues 245-266; it reads GILGLLTTLFIYVVVVYAESVR. Residues 267–291 are Cytoplasmic-facing; it reads VEIPLSHARVKGARGRFPVKLIYAS. A helical transmembrane segment spans residues 292–313; it reads VLPMILVRALQANIQFLGQILN. Topologically, residues 314–365 are extracellular; sequence STLASMPTWLGVYGGNGQVTGGLFYYLAPIYSPNAWMWWTSGATAARWQVLI. Residues 366-385 form a helical membrane-spanning segment; that stretch reads RIAIDLSFMIIGGAIFAIFW. Residues 386–428 lie on the Cytoplasmic side of the membrane; sequence VETADMGPDATARQIQNSGMQIPGFRKNQGVIEKVMERYIPQV. Residues 429 to 447 form a helical membrane-spanning segment; that stretch reads TVIGGALVGLLAVMANMLG. The Extracellular segment spans residues 448–452; the sequence is TIGNV. Residues 453–467 traverse the membrane as a helical segment; that stretch reads SGTGLLLTISITYKL. Residues 468–491 are Cytoplasmic-facing; it reads YEEIAEEQMMEMHPMMREMFGGGD.

This sequence belongs to the SecY/SEC61-alpha family. In terms of assembly, component of the Sec protein translocase complex. Heterotrimer consisting of alpha (SecY), beta (SecG) and gamma (SecE) subunits. The heterotrimers can form oligomers, although 1 heterotrimer is thought to be able to translocate proteins. Interacts with the ribosome. May interact with SecDF, and other proteins may be involved.

It is found in the cell membrane. In terms of biological role, the central subunit of the protein translocation channel SecYEG. Consists of two halves formed by TMs 1-5 and 6-10. These two domains form a lateral gate at the front which open onto the bilayer between TMs 2 and 7, and are clamped together by SecE at the back. The channel is closed by both a pore ring composed of hydrophobic SecY resides and a short helix (helix 2A) on the extracellular side of the membrane which forms a plug. The plug probably moves laterally to allow the channel to open. The ring and the pore may move independently. This is Protein translocase subunit SecY from Halobacterium salinarum (strain ATCC 700922 / JCM 11081 / NRC-1) (Halobacterium halobium).